The sequence spans 210 residues: Small ribosomal subunit protein uS7 (210 aa).

Belongs to the universal ribosomal protein uS7 family.

In Podocoryna carnea (Hydrozoan), this protein is Small ribosomal subunit protein uS7 (RPS5).